A 153-amino-acid chain; its full sequence is UPF0260 protein YcgN (153 aa).

The protein belongs to the UPF0260 family.

This Shigella flexneri serotype 5b (strain 8401) protein is UPF0260 protein YcgN.